Consider the following 554-residue polypeptide: Valerianol synthase TPS1F (554 aa).

Residues D307 and D311 each coordinate Mg(2+). Positions V326–D330 match the DDXXD motif motif. Positions 452, 456, and 460 each coordinate Mg(2+).

It belongs to the terpene synthase family. Mg(2+) serves as cofactor.

The catalysed reaction is (2E,6E)-farnesyl diphosphate + H2O = valerianol + diphosphate. It functions in the pathway secondary metabolite biosynthesis; terpenoid biosynthesis. Terpene synthase that catalyzes the biosynthesis of the terpene valerianol, which is a volatile compound of floral scent. The polypeptide is Valerianol synthase TPS1F (Camellia hiemalis (Camellia)).